The sequence spans 516 residues: Cytochrome P450 1A2 (516 aa).

O-linked (GlcNAc) serine glycosylation occurs at Ser69. A substrate-binding site is contributed by Phe226. Residue Cys458 coordinates heme.

Belongs to the cytochrome P450 family. In terms of assembly, interacts with PGRMC1; the interaction requires PGRMC1 homodimerization. It depends on heme as a cofactor.

It localises to the endoplasmic reticulum membrane. It is found in the microsome membrane. The enzyme catalyses an organic molecule + reduced [NADPH--hemoprotein reductase] + O2 = an alcohol + oxidized [NADPH--hemoprotein reductase] + H2O + H(+). It catalyses the reaction 17beta-estradiol + reduced [NADPH--hemoprotein reductase] + O2 = 2-hydroxy-17beta-estradiol + oxidized [NADPH--hemoprotein reductase] + H2O + H(+). It carries out the reaction 17beta-estradiol + reduced [NADPH--hemoprotein reductase] + O2 = 4-hydroxy-17beta-estradiol + oxidized [NADPH--hemoprotein reductase] + H2O + H(+). The catalysed reaction is estrone + reduced [NADPH--hemoprotein reductase] + O2 = 2-hydroxyestrone + oxidized [NADPH--hemoprotein reductase] + H2O + H(+). The enzyme catalyses estrone + reduced [NADPH--hemoprotein reductase] + O2 = 4-hydroxyestrone + oxidized [NADPH--hemoprotein reductase] + H2O + H(+). It catalyses the reaction cholesterol + reduced [NADPH--hemoprotein reductase] + O2 = 25-hydroxycholesterol + oxidized [NADPH--hemoprotein reductase] + H2O + H(+). It carries out the reaction all-trans-retinol + reduced [NADPH--hemoprotein reductase] + O2 = all-trans-retinal + oxidized [NADPH--hemoprotein reductase] + 2 H2O + H(+). The catalysed reaction is all-trans-retinal + reduced [NADPH--hemoprotein reductase] + O2 = all-trans-retinoate + oxidized [NADPH--hemoprotein reductase] + H2O + 2 H(+). The enzyme catalyses (5Z,8Z,11Z,14Z)-eicosatetraenoate + reduced [NADPH--hemoprotein reductase] + O2 = (14R,15S)-epoxy-(5Z,8Z,11Z)-eicosatrienoate + oxidized [NADPH--hemoprotein reductase] + H2O + H(+). It catalyses the reaction (5Z,8Z,11Z,14Z)-eicosatetraenoate + reduced [NADPH--hemoprotein reductase] + O2 = (14S,15R)-epoxy-(5Z,8Z,11Z)-eicosatrienoate + oxidized [NADPH--hemoprotein reductase] + H2O + H(+). It carries out the reaction (5Z,8Z,11Z,14Z,17Z)-eicosapentaenoate + reduced [NADPH--hemoprotein reductase] + O2 = (17R,18S)-epoxy-(5Z,8Z,11Z,14Z)-eicosatetraenoate + oxidized [NADPH--hemoprotein reductase] + H2O + H(+). The catalysed reaction is (4Z,7Z,10Z,13Z,16Z,19Z)-docosahexaenoate + reduced [NADPH--hemoprotein reductase] + O2 = (19R,20S)-epoxy-(4Z,7Z,10Z,13Z,16Z)-docosapentaenoate + oxidized [NADPH--hemoprotein reductase] + H2O + H(+). The enzyme catalyses (5S)-hydroperoxy-(6E,8Z,11Z,14Z)-eicosatetraenoate = 5-oxo-(6E,8Z,11Z,14Z)-eicosatetraenoate + H2O. It catalyses the reaction (12S)-hydroperoxy-(5Z,8Z,10E,14Z)-eicosatetraenoate = 12-oxo-(5Z,8Z,10E,14Z)-eicosatetraenoate + H2O. It carries out the reaction (15S)-hydroperoxy-(5Z,8Z,11Z,13E)-eicosatetraenoate = 15-oxo-(5Z,8Z,11Z,13E)-eicosatetraenoate + H2O. The catalysed reaction is (13S)-hydroperoxy-(9Z,11E)-octadecadienoate = 13-oxo-(9Z,11E)-octadecadienoate + H2O. The enzyme catalyses (5Z,8Z,11Z,14Z)-eicosatetraenoate + reduced [NADPH--hemoprotein reductase] + O2 = 13-hydroxy-(5Z,8Z,11Z,14Z)-eicosatetraenoate + oxidized [NADPH--hemoprotein reductase] + H2O + H(+). It catalyses the reaction (5Z,8Z,11Z,14Z)-eicosatetraenoate + reduced [NADPH--hemoprotein reductase] + O2 = 19-hydroxy-(5Z,8Z,11Z,14Z)-eicosatetraenoate + oxidized [NADPH--hemoprotein reductase] + H2O + H(+). It carries out the reaction (9Z,12Z)-octadecadienoate + reduced [NADPH--hemoprotein reductase] + O2 = 11-hydroxy-(9Z,12Z)-octadecadienoate + oxidized [NADPH--hemoprotein reductase] + H2O + H(+). The protein operates within cofactor metabolism; retinol metabolism. Its pathway is steroid metabolism; cholesterol metabolism. It participates in lipid metabolism; arachidonate metabolism. In terms of biological role, a cytochrome P450 monooxygenase involved in the metabolism of various endogenous substrates, including fatty acids, steroid hormones and vitamins. Mechanistically, uses molecular oxygen inserting one oxygen atom into a substrate, and reducing the second into a water molecule, with two electrons provided by NADPH via cytochrome P450 reductase (NADPH--hemoprotein reductase). Catalyzes the hydroxylation of carbon-hydrogen bonds. Exhibits high catalytic activity for the formation of hydroxyestrogens from estrone (E1) and 17beta-estradiol (E2), namely 2-hydroxy E1 and E2. Metabolizes cholesterol toward 25-hydroxycholesterol, a physiological regulator of cellular cholesterol homeostasis. May act as a major enzyme for all-trans retinoic acid biosynthesis in the liver. Catalyzes two successive oxidative transformation of all-trans retinol to all-trans retinal and then to the active form all-trans retinoic acid. Primarily catalyzes stereoselective epoxidation of the last double bond of polyunsaturated fatty acids (PUFA), displaying a strong preference for the (R,S) stereoisomer. Catalyzes bisallylic hydroxylation and omega-1 hydroxylation of PUFA. May also participate in eicosanoids metabolism by converting hydroperoxide species into oxo metabolites (lipoxygenase-like reaction, NADPH-independent). Plays a role in the oxidative metabolism of xenobiotics. Catalyzes the N-hydroxylation of heterocyclic amines and the O-deethylation of phenacetin. Metabolizes caffeine via N3-demethylation. This is Cytochrome P450 1A2 (CYP1A2) from Macaca fuscata fuscata (Japanese macaque).